The sequence spans 326 residues: Pyruvate dehydrogenase E1 component subunit alpha (326 aa).

Heterodimer of an alpha and a beta chain. Thiamine diphosphate serves as cofactor.

The catalysed reaction is N(6)-[(R)-lipoyl]-L-lysyl-[protein] + pyruvate + H(+) = N(6)-[(R)-S(8)-acetyldihydrolipoyl]-L-lysyl-[protein] + CO2. The pyruvate dehydrogenase complex catalyzes the overall conversion of pyruvate to acetyl-CoA and CO(2). It contains multiple copies of three enzymatic components: pyruvate dehydrogenase (E1), dihydrolipoamide acetyltransferase (E2) and lipoamide dehydrogenase (E3). The protein is Pyruvate dehydrogenase E1 component subunit alpha (pdhA) of Rickettsia felis (strain ATCC VR-1525 / URRWXCal2) (Rickettsia azadi).